The sequence spans 423 residues: NDP-N-acetyl-D-galactosaminuronic acid dehydrogenase (423 aa).

Residue 11–28 (TISVVGLGYIGLPTATVL) coordinates NAD(+). Lys218 (proton donor/acceptor) is an active-site residue. The active-site Nucleophile is Cys272.

It belongs to the UDP-glucose/GDP-mannose dehydrogenase family.

Its function is as follows. Probably involved in synthesis of sugar components of EPS I, by converting NDP-N-acetyl-D-galactosamine into NDP-N-acetyl-D-galactosaminuronic acid. The sequence is that of NDP-N-acetyl-D-galactosaminuronic acid dehydrogenase (epsD) from Ralstonia solanacearum (Pseudomonas solanacearum).